The primary structure comprises 257 residues: Short-chain dehydrogenase reductase 3a (257 aa).

Residue 12–36 (IITGGASGIGAEAVRLFTDHGAKVV) coordinates NAD(+). A substrate-binding site is contributed by S144. Y157 (proton acceptor) is an active-site residue.

It belongs to the short-chain dehydrogenases/reductases (SDR) family. Highly expressed in the radicle tip, lateral root primordia and tips, and the area surrounding the cotyledon hydathode of young seedlings.

Its function is as follows. Confers resistance to the incompatible pathogenic bacteria P.syringae pv. tomato DC3000 in a PR1-dependent manner. Seems not involved in abscisic acid (ABA) biosynthesis. The chain is Short-chain dehydrogenase reductase 3a (SDR3a) from Arabidopsis thaliana (Mouse-ear cress).